Consider the following 331-residue polypeptide: Phosphate acyltransferase (331 aa).

This sequence belongs to the PlsX family. Homodimer. Probably interacts with PlsY.

Its subcellular location is the cytoplasm. The catalysed reaction is a fatty acyl-[ACP] + phosphate = an acyl phosphate + holo-[ACP]. It functions in the pathway lipid metabolism; phospholipid metabolism. Catalyzes the reversible formation of acyl-phosphate (acyl-PO(4)) from acyl-[acyl-carrier-protein] (acyl-ACP). This enzyme utilizes acyl-ACP as fatty acyl donor, but not acyl-CoA. The chain is Phosphate acyltransferase from Lactococcus lactis subsp. lactis (strain IL1403) (Streptococcus lactis).